A 64-amino-acid polypeptide reads, in one-letter code: Conotoxin Pu3.5 (64 aa).

The signal sequence occupies residues 1 to 16 (LGVLLTICLLLFPLTA). The propeptide occupies 17–49 (VPLDGDQPADQPAGRMQDDISSEQHPFFDPVKR). Disulfide bonds link cysteine 50–cysteine 63, cysteine 51–cysteine 58, and cysteine 54–cysteine 62.

It belongs to the conotoxin M superfamily. As to expression, expressed by the venom duct.

The protein localises to the secreted. This Conus pulicarius (Flea-bitten cone) protein is Conotoxin Pu3.5.